A 187-amino-acid chain; its full sequence is Adenine phosphoribosyltransferase (187 aa).

Belongs to the purine/pyrimidine phosphoribosyltransferase family. Homodimer.

The protein resides in the cytoplasm. The catalysed reaction is AMP + diphosphate = 5-phospho-alpha-D-ribose 1-diphosphate + adenine. It participates in purine metabolism; AMP biosynthesis via salvage pathway; AMP from adenine: step 1/1. In terms of biological role, catalyzes a salvage reaction resulting in the formation of AMP, that is energically less costly than de novo synthesis. The protein is Adenine phosphoribosyltransferase of Yersinia pseudotuberculosis serotype I (strain IP32953).